A 1240-amino-acid chain; its full sequence is Cohesin subunit SA-3 (1240 aa).

Over residues 1 to 25 (MPTLWSPSTQHHGSSSGSESSPLQK) the composition is skewed to low complexity. The disordered stretch occupies residues 1-108 (MPTLWSPSTQ…VSSGNGKNES (108 aa)). Residues 97–108 (RIVSSGNGKNES) show a composition bias toward polar residues. Positions 324 to 409 (FVHRYRDILP…NRFKDRMVSM (86 aa)) constitute an SCD domain. Disordered stretches follow at residues 1077-1154 (AEAS…PELI) and 1213-1240 (DKML…MEDF). A compositionally biased stretch (polar residues) spans 1115-1125 (GPTTPTLTSTA). Positions 1126 to 1141 (VKRKQSLRTVGKKQKG) are enriched in basic residues. S1218 carries the post-translational modification Phosphoserine.

Belongs to the SCC3 family. In terms of assembly, component of the meiosis-specific cohesin complex, which also contains the SMC1 (SMC1A or SMC1B) and SMC3 heterodimer. Such complex likely contains RAD21, or the meiosis-specific related protein REC8. Interacts with CCDC79/TERB1; recruiting cohesin to telomeres to develop structural rigidity. Phosphorylated. Testis specific.

It is found in the nucleus. The protein resides in the chromosome. It localises to the centromere. Functionally, meiosis specific component of cohesin complex. The cohesin complex is required for the cohesion of sister chromatids after DNA replication. The cohesin complex apparently forms a large proteinaceous ring within which sister chromatids can be trapped. At anaphase, the complex is cleaved and dissociates from chromatin, allowing sister chromatids to segregate. The meiosis-specific cohesin complex probably replaces mitosis specific cohesin complex when it dissociates from chromatin during prophase I. This Mus musculus (Mouse) protein is Cohesin subunit SA-3 (Stag3).